The following is an 86-amino-acid chain: Putative membrane protein insertion efficiency factor (86 aa).

Belongs to the UPF0161 family.

Its subcellular location is the cell inner membrane. Functionally, could be involved in insertion of integral membrane proteins into the membrane. This is Putative membrane protein insertion efficiency factor from Pseudomonas aeruginosa (strain UCBPP-PA14).